The following is a 252-amino-acid chain: MILHAQAKHGKPGLPWLVFLHGFSGDCHEWQEVGEVFADYSRLYVDLPGHGGSAAISVDGFDDVTGLLCKTLVSYNIPDFWLVGYSLGGRVAMMAACQGLAGLCGVVVEGGHPGLQNAEQRTERQRSDRQWAQRFRTEPLTAVFADWYQQPVFASLNDEQRRELVALRSNNNGATLAAMLEATSLAVQPDLRANLSARTFAFYYLCGERDSKFRALAAELAAECYVIPRAGHNAHRENPAGVIASLAQILRF.

The protein belongs to the AB hydrolase superfamily. MenH family. In terms of assembly, monomer.

The catalysed reaction is 5-enolpyruvoyl-6-hydroxy-2-succinyl-cyclohex-3-ene-1-carboxylate = (1R,6R)-6-hydroxy-2-succinyl-cyclohexa-2,4-diene-1-carboxylate + pyruvate. It functions in the pathway quinol/quinone metabolism; 1,4-dihydroxy-2-naphthoate biosynthesis; 1,4-dihydroxy-2-naphthoate from chorismate: step 3/7. The protein operates within quinol/quinone metabolism; menaquinone biosynthesis. Catalyzes a proton abstraction reaction that results in 2,5-elimination of pyruvate from 2-succinyl-5-enolpyruvyl-6-hydroxy-3-cyclohexene-1-carboxylate (SEPHCHC) and the formation of 2-succinyl-6-hydroxy-2,4-cyclohexadiene-1-carboxylate (SHCHC). The chain is 2-succinyl-6-hydroxy-2,4-cyclohexadiene-1-carboxylate synthase from Escherichia coli O7:K1 (strain IAI39 / ExPEC).